Reading from the N-terminus, the 275-residue chain is MPLMKFKPTSPGRRSAVRVVTPDLHKGAPHAALLDSQSKSGGRNHHGRITVRHVGGGHKQHYRIIDFKRNKEGIPARVERIEYDPNRTAHIALLCYVDGERRYIIAPKGLKAGDQVIAGANAPIKTGNALPLRNIPVGTTVHGIELKPGKGAQIARAAGAAVQLVAREGIYATLRLRSGEMRKVPVECRATIGEVGNDEHNLEKLGKAGAKRRRGVRPTVRGAAMNANDHPHGGGEAKAGQGNPHPVTPWGVPTKGYKTRKNKRTQQFIVRDRRG.

The segment at 223 to 275 (AAMNANDHPHGGGEAKAGQGNPHPVTPWGVPTKGYKTRKNKRTQQFIVRDRRG) is disordered.

This sequence belongs to the universal ribosomal protein uL2 family. Part of the 50S ribosomal subunit. Forms a bridge to the 30S subunit in the 70S ribosome.

In terms of biological role, one of the primary rRNA binding proteins. Required for association of the 30S and 50S subunits to form the 70S ribosome, for tRNA binding and peptide bond formation. It has been suggested to have peptidyltransferase activity; this is somewhat controversial. Makes several contacts with the 16S rRNA in the 70S ribosome. The protein is Large ribosomal subunit protein uL2 of Xanthomonas campestris pv. campestris (strain 8004).